The primary structure comprises 397 residues: Chalcone synthase 2 (397 aa).

Cys-168 is an active-site residue.

Belongs to the thiolase-like superfamily. Chalcone/stilbene synthases family.

It carries out the reaction (E)-4-coumaroyl-CoA + 3 malonyl-CoA + 3 H(+) = 2',4,4',6'-tetrahydroxychalcone + 3 CO2 + 4 CoA. The protein operates within secondary metabolite biosynthesis; flavonoid biosynthesis. In terms of biological role, the primary product of this enzyme is 4,2',4',6'-tetrahydroxychalcone (also termed naringenin-chalcone or chalcone) which can under specific conditions spontaneously isomerize into naringenin. This Daucus carota (Wild carrot) protein is Chalcone synthase 2 (CHS2).